The primary structure comprises 194 residues: Probable GTP-binding protein EngB (194 aa).

The EngB-type G domain maps to 19–193; that stretch reads DCIQICFWGR…VLFIEENIFK (175 aa). Residues 27–34, 53–57, 70–73, 137–140, and 172–174 each bind GTP; these read GRSNVGKS, GRTQF, DLPG, TKID, and VSS. The Mg(2+) site is built by S34 and T55.

Belongs to the TRAFAC class TrmE-Era-EngA-EngB-Septin-like GTPase superfamily. EngB GTPase family. Mg(2+) is required as a cofactor.

Functionally, necessary for normal cell division and for the maintenance of normal septation. The protein is Probable GTP-binding protein EngB of Mycoplasmopsis agalactiae (strain NCTC 10123 / CIP 59.7 / PG2) (Mycoplasma agalactiae).